Here is a 465-residue protein sequence, read N- to C-terminus: Hexokinase-4 (465 aa).

The region spanning 10–454 is the Hexokinase domain; the sequence is ATKKEKVEQI…SGRGAALVSA (445 aa). The segment at 67 to 203 is hexokinase small subdomain; the sequence is EGSEVGDFLS…DFEMDVVAMV (137 aa). An ATP-binding site is contributed by 78–83; the sequence is DLGGTN. Residues 151–152, 168–169, and 204–205 contribute to the substrate site; these read SF, TK, and ND. Residues 204–443 form a hexokinase large subdomain region; that stretch reads NDTVATMISC…CEITFIESEE (240 aa). Thr-228 is a binding site for ATP. Substrate contacts are provided by Asn-231, Glu-256, and Glu-290. Residues 295-296, 332-336, and 411-415 each bind ATP; these read GK, TRFVS, and SVYKL.

This sequence belongs to the hexokinase family. In terms of assembly, monomer. Interacts with MIDN; the interaction occurs preferentially at low glucose levels and results in inhibition of hexokinase activity. Interacts with GCKR; leading to sequestration in the nucleus.

The protein localises to the cytoplasm. It is found in the nucleus. Its subcellular location is the mitochondrion. It carries out the reaction a D-hexose + ATP = a D-hexose 6-phosphate + ADP + H(+). The enzyme catalyses D-fructose + ATP = D-fructose 6-phosphate + ADP + H(+). The catalysed reaction is D-glucose + ATP = D-glucose 6-phosphate + ADP + H(+). It catalyses the reaction D-mannose + ATP = D-mannose 6-phosphate + ADP + H(+). The protein operates within carbohydrate metabolism; hexose metabolism. It participates in carbohydrate degradation; glycolysis; D-glyceraldehyde 3-phosphate and glycerone phosphate from D-glucose: step 1/4. Its activity is regulated as follows. Subject to allosteric regulation. Low glucose and high fructose-6-phosphate triggers association with the inhibitor GCKR followed by sequestration in the nucleus. In terms of biological role, catalyzes the phosphorylation of hexose, such as D-glucose, D-fructose and D-mannose, to hexose 6-phosphate (D-glucose 6-phosphate, D-fructose 6-phosphate and D-mannose 6-phosphate, respectively). Compared to other hexokinases, has a weak affinity for D-glucose, and is effective only when glucose is abundant. Mainly expressed in pancreatic beta cells and the liver and constitutes a rate-limiting step in glucose metabolism in these tissues. Since insulin secretion parallels glucose metabolism and the low glucose affinity of GCK ensures that it can change its enzymatic activity within the physiological range of glucose concentrations, GCK acts as a glucose sensor in the pancreatic beta cell. In pancreas, plays an important role in modulating insulin secretion. In liver, helps to facilitate the uptake and conversion of glucose by acting as an insulin-sensitive determinant of hepatic glucose usage. Required to provide D-glucose 6-phosphate for the synthesis of glycogen. Mediates the initial step of glycolysis by catalyzing phosphorylation of D-glucose to D-glucose 6-phosphate. The sequence is that of Hexokinase-4 from Mus musculus (Mouse).